A 630-amino-acid chain; its full sequence is 1-deoxy-D-xylulose-5-phosphate synthase (630 aa).

Thiamine diphosphate contacts are provided by residues histidine 72 and 113-115 (GHS). Residue aspartate 144 participates in Mg(2+) binding. Thiamine diphosphate is bound by residues 145–146 (GA), asparagine 173, tyrosine 284, and glutamate 367. Asparagine 173 provides a ligand contact to Mg(2+).

Belongs to the transketolase family. DXPS subfamily. In terms of assembly, homodimer. It depends on Mg(2+) as a cofactor. Thiamine diphosphate is required as a cofactor.

It carries out the reaction D-glyceraldehyde 3-phosphate + pyruvate + H(+) = 1-deoxy-D-xylulose 5-phosphate + CO2. The protein operates within metabolic intermediate biosynthesis; 1-deoxy-D-xylulose 5-phosphate biosynthesis; 1-deoxy-D-xylulose 5-phosphate from D-glyceraldehyde 3-phosphate and pyruvate: step 1/1. Its function is as follows. Catalyzes the acyloin condensation reaction between C atoms 2 and 3 of pyruvate and glyceraldehyde 3-phosphate to yield 1-deoxy-D-xylulose-5-phosphate (DXP). The chain is 1-deoxy-D-xylulose-5-phosphate synthase from Bacillus cereus (strain B4264).